The chain runs to 152 residues: Large ribosomal subunit protein bL9 (152 aa).

It belongs to the bacterial ribosomal protein bL9 family.

In terms of biological role, binds to the 23S rRNA. The polypeptide is Large ribosomal subunit protein bL9 (Synechococcus sp. (strain CC9605)).